The following is a 184-amino-acid chain: MLVLASASPRRREILGRFIKDFKVVPSNVSEECSLTEPRTYALELARRKAREVYNRVGGTVIGADTAVSIDGHILGKPGSEEEAYRMLKLLSGRVHRVTTGYCIIHEGEEVSGAVVTEVKFRELSDELIWAYIRTGEPMDKAGAYGIQGKGGLFVEWINGDYYNVVGFPLEIVWKLRELGFGVM.

Asp65 acts as the Proton acceptor in catalysis.

This sequence belongs to the Maf family. YhdE subfamily. The cofactor is a divalent metal cation.

It localises to the cytoplasm. It catalyses the reaction dTTP + H2O = dTMP + diphosphate + H(+). The enzyme catalyses UTP + H2O = UMP + diphosphate + H(+). Functionally, nucleoside triphosphate pyrophosphatase that hydrolyzes dTTP and UTP. May have a dual role in cell division arrest and in preventing the incorporation of modified nucleotides into cellular nucleic acids. The protein is dTTP/UTP pyrophosphatase of Thermococcus onnurineus (strain NA1).